A 302-amino-acid polypeptide reads, in one-letter code: RNA polymerase II holoenzyme cyclin-like subunit (302 aa).

In terms of domain architecture, Cyclin N-terminal spans 53-142 (QQLIKLGKRM…VGECEFSLIS (90 aa)).

This sequence belongs to the cyclin family. Cyclin C subfamily. Component of the srb8-11 complex, a regulatory module of the Mediator complex.

It localises to the nucleus. Component of the srb8-11 complex. The srb8-11 complex is a regulatory module of the Mediator complex which is itself involved in regulation of basal and activated RNA polymerase II-dependent transcription. The srb8-11 complex may be involved in the transcriptional repression of a subset of genes regulated by Mediator. It may inhibit the association of the Mediator complex with RNA polymerase II to form the holoenzyme complex. The srb8-11 complex phosphorylates the C-terminal domain (CTD) of the largest subunit of RNA polymerase II. This chain is RNA polymerase II holoenzyme cyclin-like subunit (ssn8), found in Emericella nidulans (strain FGSC A4 / ATCC 38163 / CBS 112.46 / NRRL 194 / M139) (Aspergillus nidulans).